We begin with the raw amino-acid sequence, 159 residues long: Regulatory protein RecX (159 aa).

The protein belongs to the RecX family.

It is found in the cytoplasm. Its function is as follows. Modulates RecA activity. The polypeptide is Regulatory protein RecX (Acinetobacter baylyi (strain ATCC 33305 / BD413 / ADP1)).